A 451-amino-acid polypeptide reads, in one-letter code: Bifunctional protein GlmU (451 aa).

The pyrophosphorylase stretch occupies residues 1–229 (MERFAVILAA…FDETIGVNDR (229 aa)). UDP-N-acetyl-alpha-D-glucosamine is bound by residues 8–11 (LAAG), K22, Q72, and 77–78 (GT). D102 contributes to the Mg(2+) binding site. Positions 139, 154, 169, and 227 each coordinate UDP-N-acetyl-alpha-D-glucosamine. N227 contributes to the Mg(2+) binding site. Positions 230 to 250 (VALSQAEAIMRKRTNERLMRE) are linker. An N-acetyltransferase region spans residues 251–451 (GVTFMDPAST…QTNKEGYTKR (201 aa)). UDP-N-acetyl-alpha-D-glucosamine contacts are provided by R332 and K350. H362 serves as the catalytic Proton acceptor. UDP-N-acetyl-alpha-D-glucosamine-binding residues include Y365 and N376. Residues 385 to 386 (NY), A422, and R439 each bind acetyl-CoA.

This sequence in the N-terminal section; belongs to the N-acetylglucosamine-1-phosphate uridyltransferase family. In the C-terminal section; belongs to the transferase hexapeptide repeat family. As to quaternary structure, homotrimer. It depends on Mg(2+) as a cofactor.

It localises to the cytoplasm. It carries out the reaction alpha-D-glucosamine 1-phosphate + acetyl-CoA = N-acetyl-alpha-D-glucosamine 1-phosphate + CoA + H(+). It catalyses the reaction N-acetyl-alpha-D-glucosamine 1-phosphate + UTP + H(+) = UDP-N-acetyl-alpha-D-glucosamine + diphosphate. Its pathway is nucleotide-sugar biosynthesis; UDP-N-acetyl-alpha-D-glucosamine biosynthesis; N-acetyl-alpha-D-glucosamine 1-phosphate from alpha-D-glucosamine 6-phosphate (route II): step 2/2. It participates in nucleotide-sugar biosynthesis; UDP-N-acetyl-alpha-D-glucosamine biosynthesis; UDP-N-acetyl-alpha-D-glucosamine from N-acetyl-alpha-D-glucosamine 1-phosphate: step 1/1. It functions in the pathway bacterial outer membrane biogenesis; LPS lipid A biosynthesis. Catalyzes the last two sequential reactions in the de novo biosynthetic pathway for UDP-N-acetylglucosamine (UDP-GlcNAc). The C-terminal domain catalyzes the transfer of acetyl group from acetyl coenzyme A to glucosamine-1-phosphate (GlcN-1-P) to produce N-acetylglucosamine-1-phosphate (GlcNAc-1-P), which is converted into UDP-GlcNAc by the transfer of uridine 5-monophosphate (from uridine 5-triphosphate), a reaction catalyzed by the N-terminal domain. The chain is Bifunctional protein GlmU from Exiguobacterium sp. (strain ATCC BAA-1283 / AT1b).